The following is a 283-amino-acid chain: Adenosyl-chloride synthase (283 aa).

Substrate is bound by residues Asp-11, 70–72, and 128–131; these read YVY and TWYG. Residue Gly-131 coordinates chloride.

This sequence belongs to the SAM hydrolase / SAM-dependent halogenase family. As to quaternary structure, homotrimer.

It carries out the reaction chloride + S-adenosyl-L-methionine = 5'-chloro-5'-deoxyadenosine + L-methionine. Its function is as follows. Involved in the biosynthesis of the proteosome inhibitor salinosporamide A (SalA). Catalyzes the halogenation of S-adenosyl-L-methionine (SAM) with chloride to generate 5'-chloro-5'-deoxyadenosine (5'-CIDA) and L-methionine. It can also use bromide and iodide, producing halogenated 5'-deoxyadenosine (5'-XDA) and L-methionine, however no halogenase activity is detected in the presence of fluoride. In Salinispora tropica (strain ATCC BAA-916 / DSM 44818 / JCM 13857 / NBRC 105044 / CNB-440), this protein is Adenosyl-chloride synthase.